The primary structure comprises 205 residues: MASDHQSPATKQQQPSSKIVLFEQENFQGRCHELSGPCTSLKEAGMEKIGSILVHSGPWVGYEQQNCKGEQFVFEKGEYPRWDSWTNSRKSESISSLRPIKVDSQEHKIVLYENPNFTGKKIEIIDDDVPSFHAHGYQEKVSSVRVQSGTWVGYQYPGYRGYQYLFEKGDYKDSSDFGAQHPQIQSVRRIRDMQWHQRGTFHPTN.

Alanine 2 carries the post-translational modification N-acetylalanine. The interval 2 to 16 (ASDHQSPATKQQQPS) is N-terminal arm. 2 consecutive Beta/gamma crystallin 'Greek key' domains span residues 17 to 56 (SKIV…LVHS) and 57 to 101 (GPWV…RPIK). The tract at residues 102-106 (VDSQE) is connecting peptide. Beta/gamma crystallin 'Greek key' domains are found at residues 107–148 (HKIV…RVQS) and 149–191 (GTWV…RRIR). The interval 193 to 205 (MQWHQRGTFHPTN) is C-terminal arm.

This sequence belongs to the beta/gamma-crystallin family. In terms of assembly, homo/heterodimer, or complexes of higher-order. The structure of beta-crystallin oligomers seems to be stabilized through interactions between the N-terminal arms. Post-translationally, the N-terminus is blocked.

Functionally, crystallins are the dominant structural components of the vertebrate eye lens. The protein is Beta-crystallin B2 of Aquarana catesbeiana (American bullfrog).